We begin with the raw amino-acid sequence, 489 residues long: MTAVTALSVASEIYPLIKTGGLADVAGALPAALLPHGVTMRTLVPGYPAVLAGIESAAPVHSFAMLFGGPARLLAARKGGLDLFVLEAPHLYDRPGSPYSGPDGKDWPDNAYRFAALARTAAEIGQGLVPSFVPDIIHAHDWQAGLTPAYLRYSGKPQPATVFTVHNLAFQGQFPRELLATLGLPPGAFSVDGVEYYGSIGYMKSGLQLSDRITTVSPAYALEIQGPQAGMGLDGLLRQRAAQLTGILNGIDDKVWNPATDKRITATYDLDHLAARRANTQSVRELFDLSLDPDRLLLGVISRLSWQKGLDLLLEALPVLLAEGIQLALLGAGDPELEERFKSAAQAYPGQIGVMIGYDEDLAHLIQAGADALLVPSRFEPCGLTQLCALRYGAVPVVARVGGLSDTVVDANEMAIAAGVATGVQFSPVTGDMLAAALSKTRALYADRAAWQALQHNGMTADVSWRNPAQHYAQLYRSLLAARQSRATA.

Lysine 18 is an ADP-alpha-D-glucose binding site.

This sequence belongs to the glycosyltransferase 1 family. Bacterial/plant glycogen synthase subfamily.

It catalyses the reaction [(1-&gt;4)-alpha-D-glucosyl](n) + ADP-alpha-D-glucose = [(1-&gt;4)-alpha-D-glucosyl](n+1) + ADP + H(+). It participates in glycan biosynthesis; glycogen biosynthesis. Functionally, synthesizes alpha-1,4-glucan chains using ADP-glucose. The chain is Glycogen synthase from Rhodopseudomonas palustris (strain BisB18).